The sequence spans 655 residues: ATP-dependent RNA helicase mss116, mitochondrial (655 aa).

The transit peptide at 1–56 (MMLGAVRRYGVVHALRASVPRTICRPSNSQLLRCQTSPVTACPQSVRLLHKSSPFF) directs the protein to the mitochondrion. The Q motif signature appears at 84–113 (DLAERGLVDPKIIRAIVKDMNIKTMTDVQS). In terms of domain architecture, Helicase ATP-binding spans 116-307 (LREILQGDDV…RKTMKPNFKF (192 aa)). 129-136 (AKTGTGKT) contributes to the ATP binding site. The short motif at 251-254 (DEAD) is the DEAD box element. Positions 341 to 503 (EFVTKYVEGE…TFATATVDMT (163 aa)) constitute a Helicase C-terminal domain. A disordered region spans residues 594–642 (YRGSSDNMSTRPDYRGGDRDMWASNSRRGREFNSDRRESRFGNHRNADD). 2 stretches are compositionally biased toward basic and acidic residues: residues 605 to 614 (PDYRGGDRDM) and 621 to 642 (RGRE…NADD).

The protein belongs to the DEAD box helicase family. DDX18/HAS1 subfamily.

It localises to the mitochondrion matrix. It carries out the reaction ATP + H2O = ADP + phosphate + H(+). Its function is as follows. ATP-dependent RNA helicase required for mitochondrial splicing of group I and II introns. Also required for efficient mitochondrial translation. In Aspergillus fumigatus (strain ATCC MYA-4609 / CBS 101355 / FGSC A1100 / Af293) (Neosartorya fumigata), this protein is ATP-dependent RNA helicase mss116, mitochondrial (mss116).